The primary structure comprises 467 residues: MKKLVLLQFLFFISFARGFTNVYPKPKYCPLLHEEDAGIPLFLTPLIENGKIDEARNKAVIQHKEVEAISSYAGFLTVNKKYNSNMFFWFFPALHDPKTAPVVLWLQGGPGATSMYGLFLENGPFIVTKNKTLKMREYSWNKCHNLLYIDNPVGTGFSFTEDERGYATNETHVGRDVHTALVQFFELFPELQTNDFYVTGESYGGKYVPAVSHAIKDYNIKAKIKINLKGLAIGNGLTDPVNQLDYGDYLYQLGLLDANGRNLFQKYEEQGKNLIKQEKWLEAFDLFDELLDGDITQQPSLYKNLTGFDYYFNYLHEKDPSNDSDYMVEWLQRADVRKAIHVGNRTFIPESKKVEKYMKADVMQSLAVLIADLTQHYRVLIYNGQLDIIVAYPLTENYLQKLKWPGAEKYKTAQRKVWFVGNELAGYSKTVDSLTEVLVRNAGHMVPLDQPKWALDLITRFTHNKGF.

The signal sequence occupies residues 1 to 18 (MKKLVLLQFLFFISFARG). N-linked (GlcNAc...) asparagine glycosylation is found at Asn-130 and Asn-169. Ser-202 is an active-site residue. N-linked (GlcNAc...) asparagine glycans are attached at residues Asn-304, Asn-322, and Asn-344. Catalysis depends on residues Asp-387 and His-444.

It belongs to the peptidase S10 family. In terms of tissue distribution, expressed by the venom duct.

It localises to the secreted. The catalysed reaction is Release of a C-terminal amino acid with broad specificity.. The sequence is that of Venom serine carboxypeptidase from Apis mellifera (Honeybee).